Consider the following 347-residue polypeptide: Spermatogenesis associated 6-like protein (347 aa).

The disordered stretch occupies residues 115–199 (SKSHGQRVQA…ENNLEHCSKK (85 aa)). Positions 116 to 125 (KSHGQRVQAT) are enriched in polar residues. The segment covering 153 to 166 (LHLHRPTQRNHGKS) has biased composition (basic residues). Basic and acidic residues predominate over residues 170–183 (PGERKPPFVVRHVD). A phosphoserine mark is found at S218 and S221. The tract at residues 234-285 (ERIVLKSQPPPPVDSSESRKPSLSHQGDASLHTETSVTTSQLSRPPSPLNQP) is disordered. A compositionally biased stretch (polar residues) spans 254 to 277 (PSLSHQGDASLHTETSVTTSQLSR).

The protein belongs to the SPATA6 family.

This Mus musculus (Mouse) protein is Spermatogenesis associated 6-like protein (Spata6l).